Reading from the N-terminus, the 241-residue chain is GTP cyclohydrolase 1 type 2 homolog (241 aa).

Residues His-62, His-63, Asp-101, His-207, and Glu-211 each contribute to the a divalent metal cation site.

This sequence belongs to the GTP cyclohydrolase I type 2/NIF3 family. As to quaternary structure, homohexamer.

The sequence is that of GTP cyclohydrolase 1 type 2 homolog from Campylobacter jejuni subsp. jejuni serotype O:2 (strain ATCC 700819 / NCTC 11168).